The chain runs to 195 residues: ATP-dependent Clp protease proteolytic subunit (195 aa).

Serine 98 functions as the Nucleophile in the catalytic mechanism. Histidine 123 is a catalytic residue.

The protein belongs to the peptidase S14 family. As to quaternary structure, fourteen ClpP subunits assemble into 2 heptameric rings which stack back to back to give a disk-like structure with a central cavity, resembling the structure of eukaryotic proteasomes.

It localises to the cytoplasm. The enzyme catalyses Hydrolysis of proteins to small peptides in the presence of ATP and magnesium. alpha-casein is the usual test substrate. In the absence of ATP, only oligopeptides shorter than five residues are hydrolyzed (such as succinyl-Leu-Tyr-|-NHMec, and Leu-Tyr-Leu-|-Tyr-Trp, in which cleavage of the -Tyr-|-Leu- and -Tyr-|-Trp bonds also occurs).. Functionally, cleaves peptides in various proteins in a process that requires ATP hydrolysis. Has a chymotrypsin-like activity. Plays a major role in the degradation of misfolded proteins. The sequence is that of ATP-dependent Clp protease proteolytic subunit from Sulfurovum sp. (strain NBC37-1).